Here is a 458-residue protein sequence, read N- to C-terminus: Elongation factor 1-alpha 1 (458 aa).

A N,N,N-trimethylglycine modification is found at Gly2. Lys3 carries the N6,N6-dimethyllysine; alternate modification. Lys3 is modified (N6-methyllysine; alternate). A tr-type G domain is found at 5-240 (KTHVNVVVIG…DAIEPPTRPT (236 aa)). Residues 14 to 21 (GHVDSGKS) form a G1 region. GTP is bound at residue 14–21 (GHVDSGKS). N6-methyllysine is present on Lys30. The segment at 70 to 74 (GITID) is G2. An N6,N6,N6-trimethyllysine modification is found at Lys79. The interval 91–94 (DAPG) is G3. Residues 91–95 (DAPGH) and 153–156 (NKMD) contribute to the GTP site. Residues 153–156 (NKMD) are G4. The tract at residues 192 to 194 (SGW) is G5. Lys316 bears the N6,N6-dimethyllysine; alternate mark. An N6-methyllysine; alternate modification is found at Lys316. Position 390 is an N6-methyllysine (Lys390).

Belongs to the TRAFAC class translation factor GTPase superfamily. Classic translation factor GTPase family. EF-Tu/EF-1A subfamily.

Its subcellular location is the cytoplasm. In terms of biological role, this protein promotes the GTP-dependent binding of aminoacyl-tRNA to the A-site of ribosomes during protein biosynthesis. This is Elongation factor 1-alpha 1 (TEF1) from Candida albicans (strain SC5314 / ATCC MYA-2876) (Yeast).